The chain runs to 305 residues: tRNA pseudouridine synthase B (305 aa).

The active-site Nucleophile is the Asp-39.

The protein belongs to the pseudouridine synthase TruB family. Type 1 subfamily.

The catalysed reaction is uridine(55) in tRNA = pseudouridine(55) in tRNA. Responsible for synthesis of pseudouridine from uracil-55 in the psi GC loop of transfer RNAs. This is tRNA pseudouridine synthase B from Staphylococcus aureus (strain MSSA476).